A 134-amino-acid chain; its full sequence is ATP synthase epsilon chain (134 aa).

This sequence belongs to the ATPase epsilon chain family. As to quaternary structure, F-type ATPases have 2 components, CF(1) - the catalytic core - and CF(0) - the membrane proton channel. CF(1) has five subunits: alpha(3), beta(3), gamma(1), delta(1), epsilon(1). CF(0) has three main subunits: a, b and c.

It localises to the cell inner membrane. Its function is as follows. Produces ATP from ADP in the presence of a proton gradient across the membrane. The sequence is that of ATP synthase epsilon chain from Nitratidesulfovibrio vulgaris (strain DSM 19637 / Miyazaki F) (Desulfovibrio vulgaris).